Reading from the N-terminus, the 324-residue chain is 2-oxoisovalerate dehydrogenase subunit beta (324 aa).

Residues Glu-29, 58-60, Gln-82, and 86-89 each bind thiamine diphosphate; these read LSE and YIFP. Residues 83-86 and His-129 each bind substrate; that span reads FADY. Catalysis depends on His-129, which acts as the Proton acceptor.

Heterotetramer of two alpha and two beta chains. Directly associated with ODBA in the E1 complex. Requires thiamine diphosphate as cofactor.

It carries out the reaction N(6)-[(R)-lipoyl]-L-lysyl-[protein] + 3-methyl-2-oxobutanoate + H(+) = N(6)-[(R)-S(8)-2-methylpropanoyldihydrolipoyl]-L-lysyl-[protein] + CO2. The branched-chain alpha-keto dehydrogenase complex catalyzes the overall conversion of alpha-keto acids to acyl-CoA and CO(2). It contains multiple copies of three enzymatic components: branched-chain alpha-keto acid decarboxylase (E1), lipoamide acyltransferase (E2) and lipoamide dehydrogenase (E3). The chain is 2-oxoisovalerate dehydrogenase subunit beta from Thermus thermophilus (strain ATCC BAA-163 / DSM 7039 / HB27).